The following is a 217-amino-acid chain: Peptide deformylase (217 aa).

Residues cysteine 91 and histidine 133 each contribute to the Fe cation site. Residue glutamate 134 is part of the active site. Histidine 137 contributes to the Fe cation binding site. Residues 153-217 (VSEDGEEEEE…RRGSAAAKEE (65 aa)) form a disordered region. Positions 155–176 (EDGEEEEEAEVAEVMPEPEAEG) are enriched in acidic residues. Over residues 177-192 (AGEPSAEGAGQAAAEA) the composition is skewed to low complexity. A compositionally biased stretch (basic and acidic residues) spans 206–217 (GERRGSAAAKEE).

It belongs to the polypeptide deformylase family. The cofactor is Fe(2+).

The catalysed reaction is N-terminal N-formyl-L-methionyl-[peptide] + H2O = N-terminal L-methionyl-[peptide] + formate. In terms of biological role, removes the formyl group from the N-terminal Met of newly synthesized proteins. Requires at least a dipeptide for an efficient rate of reaction. N-terminal L-methionine is a prerequisite for activity but the enzyme has broad specificity at other positions. The sequence is that of Peptide deformylase from Symbiobacterium thermophilum (strain DSM 24528 / JCM 14929 / IAM 14863 / T).